The following is a 250-amino-acid chain: Kv channel-interacting protein 4 (250 aa).

A KIS region spans residues 2–44 (NVRRVESISAQLEEASSTGGFLYAQNSTKRSIKERLMKLLPCS). Residues Ser17 and Ser56 each carry the phosphoserine modification. In terms of domain architecture, EF-hand 1; degenerate spans 61–117 (LEMATVRHRPEALELLEAQSKFTKKELQILYRGFKNECPSGVVNEETFKEIYSQFFP). EF-hand domains lie at 120–155 (DSTTYAHFLFNAFDTDHNGAVSFEDFIKGLSILLRG), 156–191 (TVQEKLNWAFNLYDINKDGYITKEEMLDIMKAIYDM), and 204–239 (APRQHVETFFQKMDKNKDGVVTIDEFIESCQKDENI). Ca(2+) contacts are provided by Asp133, Asp135, Asn137, Asp144, Asp169, Asn171, Asp173, Tyr175, Glu180, Asp217, Asn219, Asp221, and Glu228. The tract at residues 237–250 (ENIMRSMQLFENVI) is interaction with KCND2.

Belongs to the recoverin family. As to quaternary structure, component of heteromultimeric potassium channels. Identified in potassium channel complexes containing KCND1, KCND2, KCND3, KCNIP1, KCNIP2, KCNIP3, KCNIP4, DPP6 and DPP10. Interacts with KCND2. Interacts with KCND3. Interacts with the C-terminus of PSEN2 and probably PSEN1.

The protein resides in the cell membrane. Its subcellular location is the cytoplasm. It localises to the peroxisome. Functionally, regulatory subunit of Kv4/D (Shal)-type voltage-gated rapidly inactivating A-type potassium channels. Modulates KCND2 channel density, inactivation kinetics and rate of recovery from inactivation in a calcium-dependent and isoform-specific manner. Modulates KCND3/Kv4.3 currents. Isoform 4 does not increase KCND2 expression at the cell membrane. Isoform 4 retains KCND3 in the endoplasmic reticulum and negatively regulates its expression at the cell membrane. This is Kv channel-interacting protein 4 (KCNIP4) from Macaca fascicularis (Crab-eating macaque).